We begin with the raw amino-acid sequence, 165 residues long: Large ribosomal subunit protein bL17 (165 aa).

Residues 138-158 show a composition bias toward basic and acidic residues; that stretch reads QEKREAQEKAREEKRTARKSD. A disordered region spans residues 138–165; that stretch reads QEKREAQEKAREEKRTARKSDSVPARKK.

The protein belongs to the bacterial ribosomal protein bL17 family. Part of the 50S ribosomal subunit. Contacts protein L32.

The polypeptide is Large ribosomal subunit protein bL17 (Leptospira borgpetersenii serovar Hardjo-bovis (strain JB197)).